Here is a 657-residue protein sequence, read N- to C-terminus: tRNA 5-methylaminomethyl-2-thiouridine biosynthesis bifunctional protein MnmC (657 aa).

The interval 1 to 239 is tRNA (mnm(5)s(2)U34)-methyltransferase; the sequence is MTDRIVPATL…KRAMLVGEFA (239 aa). Positions 263–657 are FAD-dependent cmnm(5)s(2)U34 oxidoreductase; the sequence is IGAGLAGCAV…VRALRHGRVA (395 aa).

The protein in the N-terminal section; belongs to the methyltransferase superfamily. tRNA (mnm(5)s(2)U34)-methyltransferase family. It in the C-terminal section; belongs to the DAO family. The cofactor is FAD.

It is found in the cytoplasm. The catalysed reaction is 5-aminomethyl-2-thiouridine(34) in tRNA + S-adenosyl-L-methionine = 5-methylaminomethyl-2-thiouridine(34) in tRNA + S-adenosyl-L-homocysteine + H(+). Catalyzes the last two steps in the biosynthesis of 5-methylaminomethyl-2-thiouridine (mnm(5)s(2)U) at the wobble position (U34) in tRNA. Catalyzes the FAD-dependent demodification of cmnm(5)s(2)U34 to nm(5)s(2)U34, followed by the transfer of a methyl group from S-adenosyl-L-methionine to nm(5)s(2)U34, to form mnm(5)s(2)U34. In Burkholderia mallei (strain SAVP1), this protein is tRNA 5-methylaminomethyl-2-thiouridine biosynthesis bifunctional protein MnmC.